A 270-amino-acid chain; its full sequence is Cystinosin homolog (270 aa).

The 67-residue stretch at 9–75 folds into the PQ-loop 1 domain; sequence LEISYEIVGW…LYFSPVIQKQ (67 aa). Residues 14–34 traverse the membrane as a helical segment; it reads EIVGWIAFASWSISFYPQLIL. Asn-52 is a glycosylation site (N-linked (GlcNAc...) asparagine). Transmembrane regions (helical) follow at residues 93–113, 123–143, and 148–168; these read VAFS…IFIY, LAIG…FIAL, and WLWL…VKYI. The region spanning 151–213 is the PQ-loop 2 domain; it reads LISIFNSIQV…IQSIDQNSWK (63 aa). N-linked (GlcNAc...) asparagine glycosylation is present at Asn-174. The next 2 membrane-spanning stretches (helical) occupy residues 180 to 200 and 223 to 243; these read TVGW…ANYL and LLSL…YVLY. Residues 250–270 are disordered; sequence KSPETGEESNEPLIDSSHEHV.

This sequence belongs to the cystinosin (TC 2.A.43.1) family.

Its subcellular location is the lysosome membrane. Functionally, thought to transport cystine out of lysosomes. The chain is Cystinosin homolog from Arabidopsis thaliana (Mouse-ear cress).